The primary structure comprises 710 residues: Dual specificity protein kinase shkE (710 aa).

3 stretches are compositionally biased toward low complexity: residues 83 to 94 (DVSDSNNNNSTS), 107 to 129 (NNNN…NNNN), and 197 to 208 (QKQQQSQASIQQ). 2 disordered regions span residues 83 to 136 (DVSD…PTVI) and 189 to 232 (QHLT…IPPE). Positions 237–495 (DVKTDLLGGG…EVTQRMNEVL (259 aa)) constitute a Protein kinase domain. ATP contacts are provided by residues 243 to 251 (LGGGAYGKV) and Lys264. The Proton acceptor role is filled by Asp359. Residues 597–707 (WFHFDISRDI…CPITEIKVPY (111 aa)) enclose the SH2 domain.

The protein belongs to the protein kinase superfamily. Ser/Thr protein kinase family. SH2 domain-containing protein kinase subfamily.

The protein localises to the membrane. It catalyses the reaction L-seryl-[protein] + ATP = O-phospho-L-seryl-[protein] + ADP + H(+). It carries out the reaction L-threonyl-[protein] + ATP = O-phospho-L-threonyl-[protein] + ADP + H(+). Its function is as follows. Required for proper chemotaxis and phagocytosis; proper spatiotemporal control of F-actin levels in chemotaxing cells. Negative regulator of the PI3K (phosphatidylinositol 3 kinase) pathway. Predominantly phosphorylates serines and threonines and tyrosines at a lower level. In Dictyostelium discoideum (Social amoeba), this protein is Dual specificity protein kinase shkE (shkE).